The primary structure comprises 242 residues: MLANPLSQFLIKPIIPLKALGYNISITNSAVAMIFVSIAASLLLIIAFVNSKLVPSRWQAFGEILYESNIKLVHSIIGPQGKVFFPLILTLFLFISLGNIIGMVPHAFTFTSHIIVTFSLAMIVFTTTLVYGIYRHKLGFFSLFLPKNIPLWLAPIMVIIELCVFISKPISLSLRLTANMVAGHILLKIIAWSIVSLTWFFKPLPIALVIVLIGFELFISILQAYIFTILSCVYLRDVVNLH.

Helical transmembrane passes span 29–49 (SAVAMIFVSIAASLLLIIAFV), 83–103 (VFFPLILTLFLFISLGNIIGM), 114–134 (IIVTFSLAMIVFTTTLVYGIY), 140–160 (FFSLFLPKNIPLWLAPIMVII), 181–201 (VAGHILLKIIAWSIVSLTWFF), and 206–226 (IALVIVLIGFELFISILQAYI).

Belongs to the ATPase A chain family. In terms of assembly, F-type ATPases have 2 components, CF(1) - the catalytic core - and CF(0) - the membrane proton channel. CF(1) has five subunits: alpha(3), beta(3), gamma(1), delta(1), epsilon(1). CF(0) has three main subunits: a(1), b(2) and c(9-12). The alpha and beta chains form an alternating ring which encloses part of the gamma chain. CF(1) is attached to CF(0) by a central stalk formed by the gamma and epsilon chains, while a peripheral stalk is formed by the delta and b chains.

Its subcellular location is the cell inner membrane. Functionally, key component of the proton channel; it plays a direct role in the translocation of protons across the membrane. This Orientia tsutsugamushi (strain Boryong) (Rickettsia tsutsugamushi) protein is ATP synthase subunit a.